Here is a 349-residue protein sequence, read N- to C-terminus: Ferredoxin--NADP reductase 1 (349 aa).

Glu36, Lys44, Tyr48, Val88, Leu123, Asp290, and Ser331 together coordinate FAD.

Belongs to the ferredoxin--NADP reductase type 2 family. As to quaternary structure, homodimer. It depends on FAD as a cofactor.

The enzyme catalyses 2 reduced [2Fe-2S]-[ferredoxin] + NADP(+) + H(+) = 2 oxidized [2Fe-2S]-[ferredoxin] + NADPH. The polypeptide is Ferredoxin--NADP reductase 1 (Lysinibacillus sphaericus (strain C3-41)).